A 528-amino-acid polypeptide reads, in one-letter code: Galactokinase (528 aa).

4 residues coordinate alpha-D-galactose: Arg53, Glu59, His60, and Asp62. Residues Gly165, Gly167, Ser169, and Ser170 each contribute to the ATP site. Residues Asn213 and Asp217 each coordinate alpha-D-galactose. Asp217 serves as the catalytic Proton acceptor. Positions 264, 265, and 266 each coordinate ATP. Alpha-D-galactose is bound at residue Tyr274. The residue at position 381 (Ser381) is a Phosphoserine.

This sequence belongs to the GHMP kinase family. GalK subfamily.

It carries out the reaction alpha-D-galactose + ATP = alpha-D-galactose 1-phosphate + ADP + H(+). It functions in the pathway carbohydrate metabolism; galactose metabolism. In terms of biological role, galactokinase is a key enzyme in the galactose metabolism where it catalyzes the conversion of alpha-D-galactose to galactose 1-phosphate. Can also induce the transcription of the yeast GAL genes in response to the organism being challenged with galactose as the sole source of carbon. It's striking amino acid sequence similarity to GAL3 might explain its GAL3-like induction activity. The protein is Galactokinase of Saccharomyces cerevisiae (strain ATCC 204508 / S288c) (Baker's yeast).